A 454-amino-acid polypeptide reads, in one-letter code: Repulsive guidance molecule A (454 aa).

The first 47 residues, Met-1–Pro-47, serve as a signal peptide directing secretion. Residues Cys-48 to Asp-169 constitute a propeptide, removed in mature form. Residues His-114–Arg-126 are compositionally biased toward polar residues. The interval His-114–Asp-141 is disordered. Asn-115 and Asn-160 each carry an N-linked (GlcNAc...) asparagine glycan. Intrachain disulfides connect Cys-146/Cys-227 and Cys-164/Cys-316. Residue Asn-388 is glycosylated (N-linked (GlcNAc...) asparagine). A lipid anchor (GPI-anchor amidated alanine) is attached at Ala-427. Positions Ala-428–Trp-454 are cleaved as a propeptide — removed in mature form.

Belongs to the repulsive guidance molecule (RGM) family. Interacts with NEO1, BMP2 and BMP4. Autocatalytically cleaved at low pH; the two chains remain linked via two disulfide bonds. Expressed in gradient in periventricular layers of the developing nervous system. In adult, expressed in scattered cells throughout the brain.

The protein resides in the cell membrane. In terms of biological role, member of the repulsive guidance molecule (RGM) family that performs several functions in the developing and adult nervous system. Regulates cephalic neural tube closure, inhibits neurite outgrowth and cortical neuron branching, and the formation of mature synapses. Binding to its receptor NEO1/neogenin induces activation of RHOA-ROCK1/Rho-kinase signaling pathway through UNC5B-ARHGEF12/LARG-PTK2/FAK1 cascade, leading to collapse of the neuronal growth cone and neurite outgrowth inhibition. Furthermore, RGMA binding to NEO1/neogenin leads to HRAS inactivation by influencing HRAS-PTK2/FAK1-AKT1 pathway. It also functions as a bone morphogenetic protein (BMP) coreceptor that may signal through SMAD1, SMAD5, and SMAD8. This chain is Repulsive guidance molecule A (Rgma), found in Mus musculus (Mouse).